Here is a 629-residue protein sequence, read N- to C-terminus: DNA ligase B (629 aa).

Lys151 (N6-AMP-lysine intermediate) is an active-site residue. The span at 588–597 (LQKQHGTNTR) shows a compositional bias: polar residues. A disordered region spans residues 588–629 (LQKQHGTNTRNEQKGDVRRVDVKQDNGTTWLPEQDSNLRPND). Basic and acidic residues predominate over residues 598–611 (NEQKGDVRRVDVKQ). Residues 612-629 (DNGTTWLPEQDSNLRPND) are compositionally biased toward polar residues.

The protein belongs to the NAD-dependent DNA ligase family. LigB subfamily.

It carries out the reaction NAD(+) + (deoxyribonucleotide)n-3'-hydroxyl + 5'-phospho-(deoxyribonucleotide)m = (deoxyribonucleotide)n+m + AMP + beta-nicotinamide D-nucleotide.. Functionally, catalyzes the formation of phosphodiester linkages between 5'-phosphoryl and 3'-hydroxyl groups in double-stranded DNA using NAD as a coenzyme and as the energy source for the reaction. The sequence is that of DNA ligase B from Chromohalobacter salexigens (strain ATCC BAA-138 / DSM 3043 / CIP 106854 / NCIMB 13768 / 1H11).